We begin with the raw amino-acid sequence, 146 residues long: Small ribosomal subunit protein eS19 (146 aa).

This sequence belongs to the eukaryotic ribosomal protein eS19 family.

This is Small ribosomal subunit protein eS19 (RPS19A) from Oryza sativa subsp. japonica (Rice).